The primary structure comprises 92 residues: Endoribonuclease VapD homolog (92 aa).

This sequence belongs to the VapD ribonuclease family. In terms of assembly, homodimer.

Cleaves ssRNA, mostly between U:A. This is Endoribonuclease VapD homolog from Neisseria gonorrhoeae.